The primary structure comprises 99 residues: Large ribosomal subunit protein uL23 (99 aa).

This sequence belongs to the universal ribosomal protein uL23 family. Part of the 50S ribosomal subunit. Contacts protein L29, and trigger factor when it is bound to the ribosome.

One of the early assembly proteins it binds 23S rRNA. One of the proteins that surrounds the polypeptide exit tunnel on the outside of the ribosome. Forms the main docking site for trigger factor binding to the ribosome. This Hyphomonas neptunium (strain ATCC 15444) protein is Large ribosomal subunit protein uL23.